Reading from the N-terminus, the 878-residue chain is Phosphoenolpyruvate carboxylase (878 aa).

Catalysis depends on residues His-140 and Lys-545.

This sequence belongs to the PEPCase type 1 family. It depends on Mg(2+) as a cofactor.

It carries out the reaction oxaloacetate + phosphate = phosphoenolpyruvate + hydrogencarbonate. Functionally, forms oxaloacetate, a four-carbon dicarboxylic acid source for the tricarboxylic acid cycle. The polypeptide is Phosphoenolpyruvate carboxylase (Ectopseudomonas mendocina (strain ymp) (Pseudomonas mendocina)).